Reading from the N-terminus, the 246-residue chain is E3 ubiquitin-protein ligase MARCHF2 (246 aa).

The segment at 56–116 (DTPSDCPFCR…ELCHTEFAVE (61 aa)) adopts an RING-CH-type zinc-finger fold. The Zn(2+) site is built by C64, C67, C80, C82, H90, C93, C106, and C109. The required for interaction with IKBKG stretch occupies residues 121–246 (PLTEWLKDPG…LKKVAEETPV (126 aa)). The next 2 helical transmembrane spans lie at 138-158 (LCCDMVCFVFITPLAAISGWL) and 175-195 (AVGLIALTIALFTIYVLWTLV).

As to quaternary structure, interacts with STX6; the interaction promotes MARCHF2-mediated ubiquitination and degradation of CFTR. Interacts with MARCHF3. Interacts with GOPC/CAL; the interaction leads to CFTR ubiquitination and degradation. Interacts with CFTR; the interaction leads to CFTR ubiqtuitination and degradation. Interacts (via PDZ domain) with DLG1 (via PDZ domains); the interaction leads to DLG1 ubiqtuitination and degradation. Interacts with ERGIC3. Interacts with ADRB2. Interacts with IKBKG/NEMO; during the late stages of macrophage viral and bacterial infection; the interaction leads to ubiquitination and degradation of IKBKG/NEMO. Ubiquitously expressed. Present in liver (at protein level).

Its subcellular location is the endoplasmic reticulum membrane. It is found in the lysosome membrane. The protein localises to the endosome membrane. The protein resides in the golgi apparatus membrane. It localises to the cytoplasm. Its subcellular location is the cell membrane. It catalyses the reaction S-ubiquitinyl-[E2 ubiquitin-conjugating enzyme]-L-cysteine + [acceptor protein]-L-lysine = [E2 ubiquitin-conjugating enzyme]-L-cysteine + N(6)-ubiquitinyl-[acceptor protein]-L-lysine.. It participates in protein modification; protein ubiquitination. Its function is as follows. E3 ubiquitin-protein ligase that may mediate ubiquitination of TFRC and CD86, and promote their subsequent endocytosis and sorting to lysosomes via multivesicular bodies. E3 ubiquitin ligases accept ubiquitin from an E2 ubiquitin-conjugating enzyme in the form of a thioester and then directly transfer the ubiquitin to targeted substrates. Together with GOPC/CAL mediates the ubiquitination and lysosomal degradation of CFTR. Ubiquitinates and therefore mediates the degradation of DLG1. Regulates the intracellular trafficking and secretion of alpha1-antitrypsin/SERPINA1 and HP/haptoglobin via ubiquitination and degradation of the cargo receptor ERGIC3. Negatively regulates the antiviral and antibacterial immune response by repression of the NF-kB and type 1 IFN signaling pathways, via MARCHF2-mediated K48-linked polyubiquitination of IKBKG/NEMO, resulting in its proteasomal degradation. May be involved in endosomal trafficking through interaction with STX6. The sequence is that of E3 ubiquitin-protein ligase MARCHF2 (Marchf2) from Rattus norvegicus (Rat).